Here is a 234-residue protein sequence, read N- to C-terminus: Small ribosomal subunit protein uS3 (234 aa).

The region spanning 39 to 107 (IRKYVKKELY…EIAVNIKEER (69 aa)) is the KH type-2 domain. The span at 213-222 (PTEKAEETTS) shows a compositional bias: basic and acidic residues. The interval 213–234 (PTEKAEETTSKPKRRPAKKRGK) is disordered. Positions 223–234 (KPKRRPAKKRGK) are enriched in basic residues.

It belongs to the universal ribosomal protein uS3 family. Part of the 30S ribosomal subunit. Forms a tight complex with proteins S10 and S14.

Binds the lower part of the 30S subunit head. Binds mRNA in the 70S ribosome, positioning it for translation. This is Small ribosomal subunit protein uS3 from Aliarcobacter butzleri (strain RM4018) (Arcobacter butzleri).